Here is a 420-residue protein sequence, read N- to C-terminus: Carboxypeptidase A4 (420 aa).

The signal sequence occupies residues 1–16; the sequence is MKWLLFFGALIGAGIC. Residues 17 to 113 constitute a propeptide, activation peptide; the sequence is GRDKFFGDQV…EMQHNEGIER (97 aa). Residues Pro69, Val71, Asn118, Tyr122, His123, Glu126, and Phe162 each contribute to the a protein site. Positions 121-415 constitute a Peptidase M14 domain; the sequence is AYHPLEAIYH…LGLKTIMEHV (295 aa). Zn(2+) contacts are provided by His180 and Glu183. A disulfide bridge connects residues Cys249 and Cys272. The N-linked (GlcNAc...) asparagine glycan is linked to Asn259. His307 lines the Zn(2+) pocket. Glu381 acts as the Proton donor/acceptor in catalysis.

It belongs to the peptidase M14 family. As to quaternary structure, interacts with LXN. The cofactor is Zn(2+).

The protein localises to the secreted. Its function is as follows. Metalloprotease that cleaves hydrophobic C-terminal residues with a preference for -Phe, -Leu, -Ile, -Met, -Tyr and -Val. May function in peptide hormone and/or neuropeptide catabolism. This Mus musculus (Mouse) protein is Carboxypeptidase A4 (Cpa4).